Consider the following 228-residue polypeptide: Protein 33K (228 aa).

Residues 1 to 156 are disordered; it reads MAPKKKLQLP…GALRLAPNEP (156 aa). Residues 15–53 show a composition bias toward acidic residues; sequence TDEEEYWDSQAEEVLDEEEEMMEDWDSLDEASEAEEVSD. 2 stretches are compositionally biased toward low complexity: residues 54–63 and 104–119; these read ETPSPSVAFP and AAPTAPAAAAAAATAA. The interval 171–198 is necessary for nuclear subcellular location; that stretch reads YAIFQQSRGQEQELKIKNRSLRSLTRSC. The RS-repeat; required for splicing enhancer activity stretch occupies residues 177–197; that stretch reads SRGQEQELKIKNRSLRSLTRS.

The protein belongs to the adenoviridae splicing factor family. In terms of assembly, homooligomer. Interacts with DBP; this interaction occurs at a unique vertex during genome packaging. Interacts with IVa2; this interaction occurs at a unique vertex during genome packaging and seems to potentiate IVa2 and 33K oligomerization. Post-translationally, phosphorylated in vitro by human PKA and PRKDC. PRKDC inhibits, whereas PKA activates the splicing factor.

The protein resides in the host nucleus. In terms of biological role, promotes alternative splicing of late transcripts by promoting splicing at weak 3' splice sites. Required for the temporal activation of major late pre-mRNA splicing at late times of infection. Induces the splicing and expression of the late capsid vertex protein. Probably functions as the small terminase that is part of the molecular motor that translocates genomic DNA in empty capsid during DNA packaging. This motor is located at a unique vertex and comprises at least the IVa2 ATPase, the small terminase 33K and probably a portal. Forms a ring-like structure of about 17 nm in which genomic DNA is translocated into the capsid. Stimulates IVa2 ATPase activity in the presence of the viral genome. Once the DNA is packaged, the terminase detaches: the 33K protein is present in the empty particles, but not in the mature virions. Also involved in virion assembly. The sequence is that of Protein 33K from Homo sapiens (Human).